The sequence spans 836 residues: Protein translocase subunit SecA (836 aa).

Residues glutamine 85, 103–107 (GEGKT), and aspartate 492 contribute to the ATP site. The interval 786–817 (REQVAKETSTNQGGDDTLKKQPIKKEPKIGRN) is disordered. Basic and acidic residues predominate over residues 801 to 816 (DTLKKQPIKKEPKIGR). Cysteine 820, cysteine 822, cysteine 831, and cysteine 832 together coordinate Zn(2+).

This sequence belongs to the SecA family. As to quaternary structure, monomer and homodimer. Part of the essential Sec protein translocation apparatus which comprises SecA, SecYEG and auxiliary proteins SecDF. Other proteins may also be involved. The cofactor is Zn(2+).

The protein localises to the cell membrane. It localises to the cytoplasm. It catalyses the reaction ATP + H2O + cellular proteinSide 1 = ADP + phosphate + cellular proteinSide 2.. Functionally, part of the Sec protein translocase complex. Interacts with the SecYEG preprotein conducting channel. Has a central role in coupling the hydrolysis of ATP to the transfer of proteins into and across the cell membrane, serving as an ATP-driven molecular motor driving the stepwise translocation of polypeptide chains across the membrane. This Clostridium tetani (strain Massachusetts / E88) protein is Protein translocase subunit SecA.